We begin with the raw amino-acid sequence, 347 residues long: ATPase GET3 (347 aa).

26 to 33 (KGGVGKTT) is an ATP binding site. Asp57 is an active-site residue. ATP-binding residues include Glu240 and Asn267. Zn(2+) contacts are provided by Cys279 and Cys282.

It belongs to the arsA ATPase family. As to quaternary structure, homodimer. Component of the Golgi to ER traffic (GET) complex, which is composed of GET1, GET2 and GET3. Within the complex, GET1 and GET2 form a heterotetramer which is stabilized by phosphatidylinositol binding and which binds to the GET3 homodimer. Interacts with the chloride channel protein GEF1.

The protein localises to the cytoplasm. It is found in the endoplasmic reticulum. Its subcellular location is the golgi apparatus. Its function is as follows. ATPase required for the post-translational delivery of tail-anchored (TA) proteins to the endoplasmic reticulum. Recognizes and selectively binds the transmembrane domain of TA proteins in the cytosol. This complex then targets to the endoplasmic reticulum by membrane-bound receptors GET1 and GET2, where the tail-anchored protein is released for insertion. This process is regulated by ATP binding and hydrolysis. ATP binding drives the homodimer towards the closed dimer state, facilitating recognition of newly synthesized TA membrane proteins. ATP hydrolysis is required for insertion. Subsequently, the homodimer reverts towards the open dimer state, lowering its affinity for the GET1-GET2 receptor, and returning it to the cytosol to initiate a new round of targeting. Cooperates with the HDEL receptor ERD2 to mediate the ATP-dependent retrieval of resident ER proteins that contain a C-terminal H-D-E-L retention signal from the Golgi to the ER. Involved in low-level resistance to the oxyanions arsenite and arsenate, and in heat tolerance. The sequence is that of ATPase GET3 from Scheffersomyces stipitis (strain ATCC 58785 / CBS 6054 / NBRC 10063 / NRRL Y-11545) (Yeast).